The primary structure comprises 121 residues: Small ribosomal subunit protein uS13 (121 aa).

Residues 91-121 (HRRGLPVRGQNSKNNARTRKGPRRTVANKKK) form a disordered region. Residues 106–121 (ARTRKGPRRTVANKKK) are compositionally biased toward basic residues.

Belongs to the universal ribosomal protein uS13 family. In terms of assembly, part of the 30S ribosomal subunit. Forms a loose heterodimer with protein S19. Forms two bridges to the 50S subunit in the 70S ribosome.

Located at the top of the head of the 30S subunit, it contacts several helices of the 16S rRNA. In the 70S ribosome it contacts the 23S rRNA (bridge B1a) and protein L5 of the 50S subunit (bridge B1b), connecting the 2 subunits; these bridges are implicated in subunit movement. Contacts the tRNAs in the A and P-sites. In Bacillus cereus (strain ZK / E33L), this protein is Small ribosomal subunit protein uS13.